The following is a 485-amino-acid chain: Programmed cell death protein 7 (485 aa).

Residues 1–133 form a disordered region; sequence MALPPFFGQG…EAPPPPADVL (133 aa). Residues 12-48 are compositionally biased toward pro residues; that stretch reads PGPPPPQPPPPAPFGCPPPPLPSPAFPPPLPQRPGPF. Residues 49 to 71 show a composition bias toward low complexity; sequence PGASAPFLQPPLALQPRASAEAS. Pro residues-rich tracts occupy residues 82 to 96 and 109 to 130; these read PVPP…PQCR and PPPP…PPPA. Coiled coils occupy residues 232 to 335 and 362 to 411; these read VGEA…AAAR and RSEL…ESKL.

Interacts with RBM40. Component of the U11/U12 snRNPs that are part of the U12-type spliceosome.

It localises to the nucleus. Functionally, promotes apoptosis when overexpressed. The sequence is that of Programmed cell death protein 7 (PDCD7) from Homo sapiens (Human).